The chain runs to 455 residues: Chromosomal replication initiator protein DnaA (455 aa).

The domain I, interacts with DnaA modulators stretch occupies residues 1–74 (MFNFEKFWQH…IQSAYGYAGV (74 aa)). The interval 74–117 (VELLPVFQISEDSDTPERIVTPEPQHNLQTTPTRAPQREFAKDL) is domain II. Residues 118–334 (KLNEKYTFDN…GALVKVQAYA (217 aa)) form a domain III, AAA+ region region. ATP is bound by residues Gly-162, Gly-164, Lys-165, and Thr-166. Residues 335 to 455 (TIEKADIDIN…VFDLKQMLEH (121 aa)) form a domain IV, binds dsDNA region.

This sequence belongs to the DnaA family. In terms of assembly, oligomerizes as a right-handed, spiral filament on DNA at oriC.

Its subcellular location is the cytoplasm. Plays an essential role in the initiation and regulation of chromosomal replication. ATP-DnaA binds to the origin of replication (oriC) to initiate formation of the DNA replication initiation complex once per cell cycle. Binds the DnaA box (a 9 base pair repeat at the origin) and separates the double-stranded (ds)DNA. Forms a right-handed helical filament on oriC DNA; dsDNA binds to the exterior of the filament while single-stranded (ss)DNA is stabiized in the filament's interior. The ATP-DnaA-oriC complex binds and stabilizes one strand of the AT-rich DNA unwinding element (DUE), permitting loading of DNA polymerase. After initiation quickly degrades to an ADP-DnaA complex that is not apt for DNA replication. Binds acidic phospholipids. The sequence is that of Chromosomal replication initiator protein DnaA from Lactobacillus acidophilus (strain ATCC 700396 / NCK56 / N2 / NCFM).